The primary structure comprises 1368 residues: DNA-directed RNA polymerase subunit beta (1368 aa).

Belongs to the RNA polymerase beta chain family. In terms of assembly, the RNAP catalytic core consists of 2 alpha, 1 beta, 1 beta' and 1 omega subunit. When a sigma factor is associated with the core the holoenzyme is formed, which can initiate transcription.

It carries out the reaction RNA(n) + a ribonucleoside 5'-triphosphate = RNA(n+1) + diphosphate. DNA-dependent RNA polymerase catalyzes the transcription of DNA into RNA using the four ribonucleoside triphosphates as substrates. This is DNA-directed RNA polymerase subunit beta from Legionella pneumophila (strain Corby).